Consider the following 354-residue polypeptide: Protein-arginine kinase (354 aa).

Residues 24–254 enclose the Phosphagen kinase C-terminal domain; it reads IVLSSRIRLA…QQIIQQEKMA (231 aa). Residues 27–31, histidine 92, arginine 125, 176–180, and 207–212 each bind ATP; these read SSRIR, RASVM, and RGIYGE. Positions 337 to 342 match the RDXXRA motif of the pArg binding pocket involved in allosteric regulation motif; that stretch reads RDYRRA.

It belongs to the ATP:guanido phosphotransferase family.

It carries out the reaction L-arginyl-[protein] + ATP = N(omega)-phospho-L-arginyl-[protein] + ADP + H(+). Its activity is regulated as follows. Appears to be allosterically activated by the binding of pArg-containing polypeptides to the pArg-binding pocket localized in the C-terminal domain of McsB. Functionally, catalyzes the specific phosphorylation of arginine residues in a large number of proteins. Is part of the bacterial stress response system. Protein arginine phosphorylation has a physiologically important role and is involved in the regulation of many critical cellular processes, such as protein homeostasis, motility, competence, and stringent and stress responses, by regulating gene expression and protein activity. The polypeptide is Protein-arginine kinase (Bacillus anthracis (strain A0248)).